Here is a 112-residue protein sequence, read N- to C-terminus: MSNIYDSANELSRGLRGLPEYKAVKAAKDAIAADAEASKIFTDYLAFQEEIQKLAQTGQMPDASFQAKMEGFGKQIQGNSLLSEFFTKQQQLAIYLSDIEKIVFEPVSELLK.

It belongs to the UPF0342 family.

This Streptococcus pneumoniae serotype 4 (strain ATCC BAA-334 / TIGR4) protein is UPF0342 protein SP_1372.